The chain runs to 178 residues: Membrane-spanning protein YciB (178 aa).

5 helical membrane passes run 22 to 42, 52 to 72, 76 to 96, 121 to 141, and 151 to 171; these read IFIASFSLMIASLFTFIITSI, LINLIFVIVFGFLTLFYHNSS, WKVTIIYFLISIVFLINYLFI, LFWSIFFLICAVSNTYIILYF, and IFGLTILTLIAVIINGFYIYF.

This sequence belongs to the YciB family.

The protein localises to the cell membrane. In terms of biological role, plays a role in cell envelope biogenesis, maintenance of cell envelope integrity and membrane homeostasis. The chain is Membrane-spanning protein YciB from Buchnera aphidicola subsp. Baizongia pistaciae (strain Bp).